The following is a 597-amino-acid chain: NADH-quinone oxidoreductase subunit C/D (597 aa).

An NADH dehydrogenase I subunit C region spans residues 1–187 (MIDENKKKNT…ESFFLDEQKE (187 aa)). Residues 211 to 597 (DFMFLNLGPN…IDFVMSDVDR (387 aa)) form an NADH dehydrogenase I subunit D region.

It in the N-terminal section; belongs to the complex I 30 kDa subunit family. This sequence in the C-terminal section; belongs to the complex I 49 kDa subunit family. In terms of assembly, NDH-1 is composed of 13 different subunits. Subunits NuoB, CD, E, F, and G constitute the peripheral sector of the complex.

The protein localises to the cell inner membrane. The enzyme catalyses a quinone + NADH + 5 H(+)(in) = a quinol + NAD(+) + 4 H(+)(out). NDH-1 shuttles electrons from NADH, via FMN and iron-sulfur (Fe-S) centers, to quinones in the respiratory chain. The immediate electron acceptor for the enzyme in this species is believed to be ubiquinone. Couples the redox reaction to proton translocation (for every two electrons transferred, four hydrogen ions are translocated across the cytoplasmic membrane), and thus conserves the redox energy in a proton gradient. This Buchnera aphidicola subsp. Schizaphis graminum (strain Sg) protein is NADH-quinone oxidoreductase subunit C/D.